The following is a 520-amino-acid chain: AMP-binding domain-containing enzyme iboA (520 aa).

180 to 191 (LTSGSTSGSPKV) provides a ligand contact to ATP. An FACS motif is present at residues 397–447 (DGNFHTGDLFEKQLDGSYLFRGRGDDWIKSEDSRFIDTKAIEEKINDVCSD).

Belongs to the ATP-dependent AMP-binding enzyme family. The cofactor is Mg(2+).

The protein operates within secondary metabolite biosynthesis. Functionally, AMP-binding domain-containing enzyme; part of the gene cluster that mediates the biosynthesis of the psychoactive metabolites ibotenic acid and muscimol. The first committed step is glutamate hydroxylation by the 2-oxoglutarate-dependent dioxygenase iboH, and the last step is decarboxylation of ibotenic acid to muscimol by the decarboxylase iboD. The order of the intermediate reactions is somewhat ambiguous. IboA likely activates the carboxylic acid at position 5 to introduce an amide bond, and the flavin monooxygenase iboF generates the N-O bond. There are several options for the latter step. One option is that iboF directly hydroxylates the amide nitrogen formed by iboA to produce a hydroxamic acid species. Another option is that iboF hydroxylates an external N-containing compound, whose resulting N-O bond is subsequently introduced into the hydroxyglutamate scaffold. The paralogous PLP-dependent cystathionine gamma-synthase-like enzymes iboG1 and iboG2 are likely involved in substitution of the OH group at position 3 by the O-N moiety. The first cyclic intermediate is most probably tricholomic acid which is likely desaturated to ibotenic acid by the cytochrome P450 monooxygenase iboC. The polypeptide is AMP-binding domain-containing enzyme iboA (Amanita muscaria (strain Koide BX008)).